Consider the following 203-residue polypeptide: Glycerol-3-phosphate acyltransferase (203 aa).

5 helical membrane-spanning segments follow: residues 10 to 30 (MLIL…GLIL), 59 to 79 (GAAA…VLLA), 87 to 107 (AAQV…WLGF), 116 to 136 (FLGL…LSWL), and 160 to 180 (LVLL…LMVF).

The protein belongs to the PlsY family. In terms of assembly, probably interacts with PlsX.

Its subcellular location is the cell inner membrane. The enzyme catalyses an acyl phosphate + sn-glycerol 3-phosphate = a 1-acyl-sn-glycero-3-phosphate + phosphate. It participates in lipid metabolism; phospholipid metabolism. Its function is as follows. Catalyzes the transfer of an acyl group from acyl-phosphate (acyl-PO(4)) to glycerol-3-phosphate (G3P) to form lysophosphatidic acid (LPA). This enzyme utilizes acyl-phosphate as fatty acyl donor, but not acyl-CoA or acyl-ACP. This is Glycerol-3-phosphate acyltransferase from Ruegeria pomeroyi (strain ATCC 700808 / DSM 15171 / DSS-3) (Silicibacter pomeroyi).